The sequence spans 181 residues: TATA-box-binding protein (181 aa).

Repeat copies occupy residues 7 to 83 (IVNV…IKEL) and 98 to 173 (VQNM…SATL).

This sequence belongs to the TBP family.

In terms of biological role, general factor that plays a role in the activation of archaeal genes transcribed by RNA polymerase. Binds specifically to the TATA box promoter element which lies close to the position of transcription initiation. This chain is TATA-box-binding protein, found in Methanococcus vannielii (strain ATCC 35089 / DSM 1224 / JCM 13029 / OCM 148 / SB).